Reading from the N-terminus, the 1330-residue chain is Sister chromatid cohesion protein PDS5 homolog A (1330 aa).

An HEAT repeat occupies 387 to 423; that stretch reads SLVNDQLLGFVRERTLDKRWRVRKEAMMGLAQLYKKY. A disordered region spans residues 1138–1330; sequence VNKPLSATGR…AAQRQIDLQR (193 aa). A compositionally biased stretch (low complexity) spans 1160-1171; that stretch reads SNISVNSELSSS. Over residues 1216 to 1225 the composition is skewed to polar residues; it reads SDQATQGNST.

Belongs to the PDS5 family. As to quaternary structure, interacts with the cohesin complex. Binds chromatin in a cohesin-dependent manner.

The protein localises to the nucleus. Functionally, may regulate sister chromatid cohesion during mitosis and couple it to DNA replication. In Gallus gallus (Chicken), this protein is Sister chromatid cohesion protein PDS5 homolog A.